Consider the following 153-residue polypeptide: Histone H2B.3 (153 aa).

2 stretches are compositionally biased toward basic and acidic residues: residues Met-1–Ala-10 and Ala-20–Lys-54. Positions Met-1–Lys-60 are disordered. An N6-acetyllysine mark is found at Lys-41 and Lys-42. Residue Lys-149 forms a Glycyl lysine isopeptide (Lys-Gly) (interchain with G-Cter in ubiquitin) linkage.

Belongs to the histone H2B family. The nucleosome is a histone octamer containing two molecules each of H2A, H2B, H3 and H4 assembled in one H3-H4 heterotetramer and two H2A-H2B heterodimers. The octamer wraps approximately 147 bp of DNA. In terms of processing, the N-terminus is blocked. Post-translationally, can be acetylated to form H2BK33ac and H2BK34ac. Acetylated mainly on the ubiquitinated form. Monoubiquitinated to form H2BK143ub1; which is increased during the light period and may give a specific tag for epigenetic transcriptional activation.

It is found in the nucleus. It localises to the chromosome. In terms of biological role, core component of nucleosome. Nucleosomes wrap and compact DNA into chromatin, limiting DNA accessibility to the cellular machineries which require DNA as a template. Histones thereby play a central role in transcription regulation, DNA repair, DNA replication and chromosomal stability. DNA accessibility is regulated via a complex set of post-translational modifications of histones, also called histone code, and nucleosome remodeling. In Chlamydomonas reinhardtii (Chlamydomonas smithii), this protein is Histone H2B.3.